The chain runs to 180 residues: Ribulose bisphosphate carboxylase small subunit, chloroplastic 2 (180 aa).

The N-terminal 54 residues, M1–Q54, are a transit peptide targeting the chloroplast.

The protein belongs to the RuBisCO small chain family. In terms of assembly, heterohexadecamer of 8 large and 8 small subunits.

It localises to the plastid. It is found in the chloroplast. Its function is as follows. RuBisCO catalyzes two reactions: the carboxylation of D-ribulose 1,5-bisphosphate, the primary event in carbon dioxide fixation, as well as the oxidative fragmentation of the pentose substrate. Both reactions occur simultaneously and in competition at the same active site. Although the small subunit is not catalytic it is essential for maximal activity. This chain is Ribulose bisphosphate carboxylase small subunit, chloroplastic 2, found in Mesembryanthemum crystallinum (Common ice plant).